The chain runs to 1943 residues: Protocadherin-15 (1943 aa).

The first 26 residues, 1-26, serve as a signal peptide directing secretion; that stretch reads MFLQFAVWKCLPHGILIASLLVVSWG. Residues 27–1381 are Extracellular-facing; the sequence is QYDDDWQYED…GESLGYTEGA (1355 aa). A disulfide bond links cysteine 37 and cysteine 125. 11 Cadherin domains span residues 45 to 152, 153 to 270, 283 to 400, 401 to 514, 515 to 621, 622 to 722, 724 to 824, 825 to 931, 932 to 1040, 1042 to 1149, and 1150 to 1264; these read PATI…SPTF, KHES…GPMF, RPLT…SPYF, TMPS…TPTF, PEIS…PPRF, PQLM…APVF, PYLP…SPVF, TNST…PPVF, SKRI…IPRF, QEEY…PPVF, and QKKF…PPTL. Asparagine 57, asparagine 102, and asparagine 206 each carry an N-linked (GlcNAc...) asparagine glycan. Residues asparagine 424, asparagine 564, asparagine 667, asparagine 729, asparagine 773, asparagine 826, and asparagine 856 are each glycosylated (N-linked (GlcNAc...) asparagine). N-linked (GlcNAc...) asparagine glycans are attached at residues asparagine 1069, asparagine 1089, and asparagine 1180. A helical membrane pass occupies residues 1382-1402; sequence LLALAFIIILCCIPAILVVLV. The Cytoplasmic portion of the chain corresponds to 1403–1943; it reads SYRQFKVRQA…VQPHSQSTSL (541 aa). 3 disordered regions span residues 1425–1453, 1475–1533, and 1714–1865; these read PAAKPAAPVPAAPAPPPPPPPPPPGAHLY, GNNS…STHN, and ILNS…EPHR. Pro residues predominate over residues 1431–1449; sequence APVPAAPAPPPPPPPPPPG. Composition is skewed to basic and acidic residues over residues 1480–1489 and 1498–1509; these read PEDRSSHRDG and ESHEPAHVEGPL. 2 stretches are compositionally biased toward pro residues: residues 1742 to 1760 and 1769 to 1779; these read PHPPSISAPLPHPPLPRPP and PLSPPNPPPPQ. The span at 1784–1795 shows a compositional bias: low complexity; the sequence is SLPISTPPTSSL. Pro residues predominate over residues 1796-1821; it reads PLPPPLSLPPPPRPPAPRLFPQPPST. Residues 1822 to 1834 are compositionally biased toward low complexity; that stretch reads SIPSTDSISAPAA. Residues 1846 to 1858 are compositionally biased toward polar residues; the sequence is TTSTTQPPASNPQ.

As to quaternary structure, antiparallel heterodimer with CDH23. Found in a complex with TMIE and LHFPL5. Interacts with LHFPL5/TMHS; this interaction is required for efficient localization to hair bundles. Interacts with MYO7A. Interacts with USH1G; this interaction may recruit USH1G to the plasma membrane. Interacts with TOMT. Isoforms CD1 and CD3 interact with TMC1 (via N-terminus) and TMC2 (via N-terminus). Interacts with PIEZO1. As to expression, expressed in brain and sensory epithelium of the developing inner ear. Expressed in the retina, in the photoreceptor inner segments, the outer plexiform layer, the inner nuclei layer and the ganglion cell layer and, more diffusely in the inner plexiform layer (at protein level). Not detected in the retinal pigment epithelium (at protein level). Expressed in the spleen, dorsal root ganglion, dorsal aspect of neural tube, floor plate and ependymal cells adjacent to the neural canal.

The protein localises to the cell membrane. Its subcellular location is the secreted. Its function is as follows. Calcium-dependent cell-adhesion protein. Required for inner ear neuroepithelial cell elaboration and cochlear function. Probably involved in the maintenance of normal retinal function. The polypeptide is Protocadherin-15 (Pcdh15) (Mus musculus (Mouse)).